The primary structure comprises 335 residues: Glycerol-3-phosphate dehydrogenase [NAD(P)+] (335 aa).

The NADPH site is built by Ser15, Tyr16, His36, and Lys110. 3 residues coordinate sn-glycerol 3-phosphate: Lys110, Gly139, and Thr141. Residue Ala143 coordinates NADPH. Residues Lys195, Asp248, Ser258, Arg259, and Asn260 each contribute to the sn-glycerol 3-phosphate site. The active-site Proton acceptor is Lys195. Arg259 is an NADPH binding site. Residues Val283 and Glu285 each contribute to the NADPH site.

It belongs to the NAD-dependent glycerol-3-phosphate dehydrogenase family.

It is found in the cytoplasm. It catalyses the reaction sn-glycerol 3-phosphate + NAD(+) = dihydroxyacetone phosphate + NADH + H(+). It carries out the reaction sn-glycerol 3-phosphate + NADP(+) = dihydroxyacetone phosphate + NADPH + H(+). It participates in membrane lipid metabolism; glycerophospholipid metabolism. Its function is as follows. Catalyzes the reduction of the glycolytic intermediate dihydroxyacetone phosphate (DHAP) to sn-glycerol 3-phosphate (G3P), the key precursor for phospholipid synthesis. The chain is Glycerol-3-phosphate dehydrogenase [NAD(P)+] from Haemophilus influenzae (strain ATCC 51907 / DSM 11121 / KW20 / Rd).